Reading from the N-terminus, the 427-residue chain is ATP-sensitive inward rectifier potassium channel 12 (427 aa).

The Cytoplasmic segment spans residues 1–77; the sequence is MTAASRANPY…LADMFTTCVD (77 aa). Cys75 is modified (S-nitrosocysteine). The chain crosses the membrane as a helical span at residues 78–104; it reads IRWRYMLLIFSLAFLASWLLFGIIFWV. Residues Arg79 and Arg81 each contribute to the a 1,2-diacyl-sn-glycero-3-phospho-(1D-myo-inositol-4,5-bisphosphate) site. Topologically, residues 105 to 129 are extracellular; it reads IAVAHGDLEPAEGRGRTPCVLQVHG. Cys123 and Cys155 form a disulfide bridge. An intramembrane region (helical; Pore-forming) is located at residues 130–146; sequence FMAAFLFSIETQTTIGY. K(+) contacts are provided by Thr143, Ile144, Gly145, and Tyr146. The short motif at 143 to 148 is the Selectivity filter element; sequence TIGYGL. Topologically, residues 147–155 are extracellular; it reads GLRCVTEEC. Residues 156–183 form a helical membrane-spanning segment; it reads PVAVFMVVAQSIVGCIIDSFMIGAIMAK. Residues Lys183 and Lys188 each coordinate a 1,2-diacyl-sn-glycero-3-phospho-(1D-myo-inositol-4,5-bisphosphate). The Cytoplasmic portion of the chain corresponds to 184–427; it reads MARPKKRAQT…ERPYRRESEI (244 aa). The disordered stretch occupies residues 387–427; sequence DEEDEVATDRDGRSPQPEHDFDRLQASSAALERPYRRESEI. Basic and acidic residues predominate over residues 393 to 409; sequence ATDRDGRSPQPEHDFDR. A PDZ-binding motif is present at residues 425–427; that stretch reads SEI.

This sequence belongs to the inward rectifier-type potassium channel (TC 1.A.2.1) family. KCNJ12 subfamily. Homotetramer. Forms heteromer with KCNJ4. Can form heteromeric channels with Kir2.6/KCNJ18. Association, via its PDZ-recognition domain, with LIN7A, LIN7B, LIN7C, DLG1, CASK and APBA1 plays a key role in its localization and trafficking. Highest level in cerebellum.

It is found in the membrane. The protein localises to the cell membrane. The protein resides in the sarcolemma. It localises to the T-tubule. It carries out the reaction K(+)(in) = K(+)(out). With respect to regulation, activated by phosphatidylinositol 4,5-biphosphate (PtdIns(4,5)P2). PtdIns(4,5)P2 binding to the cytoplasmic side of the channel triggers a conformation change leading to channel opening. Inhibited by Ba(2+). In terms of biological role, inward rectifying potassium channel that probably participates in controlling the resting membrane potential in electrically excitable cells. It probably participates in establishing action potential waveform and excitability of neuronal and muscle tissues. Inward rectifier potassium channels are characterized by a greater tendency to allow potassium to flow into the cell rather than out of it. Their voltage dependence is regulated by the concentration of extracellular potassium; as external potassium is raised, the voltage range of the channel opening shifts to more positive voltages. The inward rectification is mainly due to the blockage of outward current by internal magnesium. The polypeptide is ATP-sensitive inward rectifier potassium channel 12 (Kcnj12) (Mus musculus (Mouse)).